An 874-amino-acid polypeptide reads, in one-letter code: Alanine--tRNA ligase (874 aa).

His562, His566, Cys665, and His669 together coordinate Zn(2+).

Belongs to the class-II aminoacyl-tRNA synthetase family. Zn(2+) is required as a cofactor.

It localises to the cytoplasm. The enzyme catalyses tRNA(Ala) + L-alanine + ATP = L-alanyl-tRNA(Ala) + AMP + diphosphate. Catalyzes the attachment of alanine to tRNA(Ala) in a two-step reaction: alanine is first activated by ATP to form Ala-AMP and then transferred to the acceptor end of tRNA(Ala). Also edits incorrectly charged Ser-tRNA(Ala) and Gly-tRNA(Ala) via its editing domain. This Pseudomonas syringae pv. syringae (strain B728a) protein is Alanine--tRNA ligase.